Reading from the N-terminus, the 294-residue chain is Urease accessory protein UreD 1 (294 aa).

Positions 1 to 22 are disordered; the sequence is MALSLDGLPEKPAPAEAPSPPV. Pro residues predominate over residues 11 to 21; it reads KPAPAEAPSPP.

Belongs to the UreD family. In terms of assembly, ureD, UreF and UreG form a complex that acts as a GTP-hydrolysis-dependent molecular chaperone, activating the urease apoprotein by helping to assemble the nickel containing metallocenter of UreC. The UreE protein probably delivers the nickel.

It localises to the cytoplasm. Its function is as follows. Required for maturation of urease via the functional incorporation of the urease nickel metallocenter. The polypeptide is Urease accessory protein UreD 1 (Methylorubrum extorquens (strain PA1) (Methylobacterium extorquens)).